A 201-amino-acid chain; its full sequence is Ras-related protein Rab-35 (201 aa).

Gly-18, Val-19, Gly-20, Lys-21, Ser-22, Ser-23, Ser-34, Gly-35, Tyr-37, Thr-39, and Thr-40 together coordinate GTP. Ser-22 provides a ligand contact to Mg(2+). The Switch 1 signature appears at 30-42 (DNTFSGSYITTIG). The Mg(2+) site is built by Thr-40 and Asp-63. The Switch 2 motif lies at 64–80 (TAGQERFRTITSTYYRG). Gly-66 is a binding site for GTP. A Phosphothreonine; by LRRK2 modification is found at Thr-72. The residue at position 75 (Ser-75) is an O-(2-cholinephosphoryl)serine. The residue at position 77 (Tyr-77) is an O-AMP-tyrosine. 5 residues coordinate GTP: Asn-120, Lys-121, Asp-123, Ala-151, and Lys-152. 2 S-geranylgeranyl cysteine lipidation sites follow: Cys-200 and Cys-201.

The protein belongs to the small GTPase superfamily. Rab family. Interacts with DENND1A and DENND1B; in a nucleotide-dependent manner. Interacts with DENND1C; weak interaction which is nucleotide-independent. Interacts (GTP-bound form) with ACAP2, RUSC2, OCRL MICAL1 and MICALL1; the interaction is direct and probably recruits these effectors to membranes. Interacts with EHD1; the interaction is indirect through MICALL1 and probably recruits EHD1 to membranes. Interacts with GDI1, GDI2, CHM and CHML; phosphorylation at Thr-72 by LRRK2 disrupts these interactions. The cofactor is Mg(2+). Phosphorylation at Thr-72 by LRRK2 prevents the association of regulatory proteins including CHM, CHML and GDP dissociation inhibitors GDI1 and GDI2. Post-translationally, AMPylation at Tyr-77 by L.pneumophila DrrA occurs in the switch 2 region and leads to moderate inactivation of the GTPase activity. It appears to prolong the lifetime of the GTP state of RAB1B by restricting access of GTPase effectors to switch 2 and blocking effector-stimulated GTP hydrolysis, thereby rendering RAB35 constitutively active. In terms of processing, phosphocholinated by L.pneumophila AnkX. Both GDP-bound and GTP-bound forms can be phosphocholinated. Phosphocholination inhibits the GEF activity of DENND1A.

It is found in the cell membrane. It localises to the membrane. The protein resides in the clathrin-coated pit. Its subcellular location is the cytoplasmic vesicle. The protein localises to the clathrin-coated vesicle. It is found in the endosome. It localises to the melanosome. It carries out the reaction GTP + H2O = GDP + phosphate + H(+). Its activity is regulated as follows. Regulated by guanine nucleotide exchange factors (GEFs) including DENND1A, DENND1B and DENND1C which promote the exchange of bound GDP for free GTP. Regulated by GTPase activating proteins (GAPs) including TBC1D10 and TBC1D13 which increase GTP hydrolysis activity. Inhibited by GDP dissociation inhibitors (GDIs) which prevent Rab-GDP dissociation. In terms of biological role, the small GTPases Rab are key regulators of intracellular membrane trafficking, from the formation of transport vesicles to their fusion with membranes. Rabs cycle between an inactive GDP-bound form and an active GTP-bound form that is able to recruit to membranes different sets of downstream effectors directly responsible for vesicle formation, movement, tethering and fusion. RAB35 is involved in the process of endocytosis and is an essential rate-limiting regulator of the fast recycling pathway back to the plasma membrane. During cytokinesis, required for the postfurrowing terminal steps, namely for intercellular bridge stability and abscission, possibly by controlling phosphatidylinositol 4,5-bis phosphate (PIP2) and SEPT2 localization at the intercellular bridge. May indirectly regulate neurite outgrowth. Together with TBC1D13 may be involved in regulation of insulin-induced glucose transporter SLC2A4/GLUT4 translocation to the plasma membrane in adipocytes. This Homo sapiens (Human) protein is Ras-related protein Rab-35.